We begin with the raw amino-acid sequence, 940 residues long: Lysine-specific demethylase 7A (940 aa).

The PHD-type zinc finger occupies 37–88 (PVYCVCRQPYDVNRFMIECDVCKDWFHGSCVGVEEHHAVDIDLYHCPDCAAL). Residues 97–114 (RRNWHRHDYTEVDDGSKP) form a linker region. A JmjC domain is found at 230-386 (FSDTKMSELV…MQLRCYEMEK (157 aa)). Thr-279 lines the substrate pocket. Fe cation contacts are provided by His-282 and Asp-284. Substrate is bound at residue Lys-299. His-354 is a Fe cation binding site. Disordered stretches follow at residues 483–509 (VKSQGIPSVCPVSRPSNEASPPYHSRR), 599–670 (LYTA…PDCT), 710–729 (SQKPSRQEIPVKRECPTSTS), 818–854 (NAQDLSRSQKHIKKESSSEINQKAQSRHCVDSNSSSI), and 876–920 (SPER…MATA). Ser-604 carries the post-translational modification Phosphoserine. Polar residues predominate over residues 613-623 (TQNANMKTEQS). Residues 714–724 (SRQEIPVKREC) are compositionally biased toward basic and acidic residues.

It belongs to the JHDM1 histone demethylase family. JHDM1D subfamily. It depends on Fe(2+) as a cofactor.

The protein resides in the nucleus. It catalyses the reaction N(6),N(6)-dimethyl-L-lysyl(9)-[histone H3] + 2 2-oxoglutarate + 2 O2 = L-lysyl(9)-[histone H3] + 2 formaldehyde + 2 succinate + 2 CO2. It carries out the reaction N(6),N(6)-dimethyl-L-lysyl(27)-[histone H3] + 2 2-oxoglutarate + 2 O2 = L-lysyl(27)-[histone H3] + 2 formaldehyde + 2 succinate + 2 CO2. The enzyme catalyses N(6),N(6)-dimethyl-L-lysyl(36)-[histone H3] + 2-oxoglutarate + O2 = N(6)-methyl-L-lysyl(36)-[histone H3] + formaldehyde + succinate + CO2. The catalysed reaction is N(6)-methyl-L-lysyl(20)-[histone H4] + 2-oxoglutarate + O2 = L-lysyl(20)-[histone H4] + formaldehyde + succinate + CO2. Histone demethylase required for brain development. Specifically demethylates dimethylated 'Lys-9', 'Lys-27' and 'Lys-36' (H3K9me2, H3K27me2, H3K36me2, respectively) of histone H3 and monomethylated histone H4 'Lys-20' residue (H4K20Me1), thereby playing a central role in histone code. Specifically binds trimethylated 'Lys-4' of histone H3 (H3K4me3), affecting histone demethylase specificity: in presence of H3K4me3, it has no demethylase activity toward H3K9me2, while it has high activity toward H3K27me2. Demethylates H3K9me2 in absence of H3K4me3. Has activity toward H4K20Me1 only when nucleosome is used as a substrate and when not histone octamer is used as substrate. The chain is Lysine-specific demethylase 7A (Kdm7a) from Mus musculus (Mouse).